We begin with the raw amino-acid sequence, 163 residues long: Ribonuclease H (163 aa).

The region spanning 16 to 157 (TTSPVEIYCD…CDSLARQAIT (142 aa)) is the RNase H type-1 domain. D25, E63, D85, and D149 together coordinate Mg(2+).

The protein belongs to the RNase H family. As to quaternary structure, monomer. Mg(2+) serves as cofactor.

The protein resides in the cytoplasm. The enzyme catalyses Endonucleolytic cleavage to 5'-phosphomonoester.. Endonuclease that specifically degrades the RNA of RNA-DNA hybrids. This is Ribonuclease H from Pelobacter propionicus (strain DSM 2379 / NBRC 103807 / OttBd1).